Here is a 216-residue protein sequence, read N- to C-terminus: MOB kinase activator 3B (216 aa).

Positions 82, 87, 164, and 169 each coordinate Zn(2+).

The protein belongs to the MOB1/phocein family.

Functionally, modulates LATS1 expression in the Hippo signaling pathway which plays a pivotal role in organ size control and tumor suppression by restricting proliferation and promoting apoptosis. In Homo sapiens (Human), this protein is MOB kinase activator 3B.